A 745-amino-acid polypeptide reads, in one-letter code: Copper-transporting ATPase (745 aa).

The 67-residue stretch at 1-67 (MKESFYIEGM…LIEKLGYSPK (67 aa)) folds into the HMA domain. Topologically, residues 1–83 (MKESFYIEGM…KKEFFSPNVK (83 aa)) are cytoplasmic. Positions 12 and 15 each coordinate Cu cation. A helical transmembrane segment spans residues 84–104 (LALAVIFTLFVVYLSMGAMLS). The Extracellular portion of the chain corresponds to 105–124 (PSLLPKSLLAIDNHSNFLNA). Residues 125–144 (CLQLIGTLIVMHWGRDFYIQ) traverse the membrane as a helical segment. Topologically, residues 145–151 (GFKALWH) are cytoplasmic. A helical membrane pass occupies residues 152–172 (RQPNMSSLIAIGTSAALISSL). The Extracellular portion of the chain corresponds to 173–194 (WQLYLVYTDHYTDQWSYGHYYF). Residues 195–215 (ESVCVILMFVMVGKRIENVSK) traverse the membrane as a helical segment. Residues 216–343 (DKALDAMQAL…KAEISRLADK (128 aa)) lie on the Cytoplasmic side of the membrane. Residues 344–366 (VSSVFVPSVIAIAILAFVVWLII) traverse the membrane as a helical segment. The Extracellular segment spans residues 367-379 (APKPDFWWNFGIA). The chain crosses the membrane as a helical span at residues 380-397 (LEVFVSVLVISCPCALGL). Residues 398-685 (ATLMSILVAN…KLSQATIKNI (288 aa)) lie on the Cytoplasmic side of the membrane. Catalysis depends on Asp-435, which acts as the 4-aspartylphosphate intermediate. Mg(2+) contacts are provided by Asp-631 and Asp-635. A helical membrane pass occupies residues 686-705 (KENLFWAFCYNSVFIPLACG). Topologically, residues 706-716 (VLYKANIMLSP) are extracellular. The helical transmembrane segment at 717–735 (AIAGLAMSLSSVSVVLNSQ) threads the bilayer. Over 736–745 (RLRNFKIKDH) the chain is Cytoplasmic.

Belongs to the cation transport ATPase (P-type) (TC 3.A.3) family. Type IB subfamily.

Its subcellular location is the cell membrane. The catalysed reaction is Cu(2+)(in) + ATP + H2O = Cu(2+)(out) + ADP + phosphate + H(+). In terms of biological role, probably involved in copper export. In Helicobacter pylori (Campylobacter pylori), this protein is Copper-transporting ATPase (copA).